Here is a 295-residue protein sequence, read N- to C-terminus: GTPase Era (295 aa).

An Era-type G domain is found at 5 to 172; it reads YCGYAAIIGR…EQAVHQLMPE (168 aa). Residues 13–20 form a G1 region; the sequence is GRPNVGKS. 13–20 is a binding site for GTP; sequence GRPNVGKS. The interval 39 to 43 is G2; the sequence is QTTRY. Residues 60–63 form a G3 region; that stretch reads DTPG. GTP contacts are provided by residues 60-64 and 121-124; these read DTPGL and NKVD. The tract at residues 121-124 is G4; sequence NKVD. A G5 region spans residues 151 to 153; that stretch reads LSA. In terms of domain architecture, KH type-2 spans 203-279; it reads LGQEIPYSLA…FLQLWVKVKS (77 aa).

This sequence belongs to the TRAFAC class TrmE-Era-EngA-EngB-Septin-like GTPase superfamily. Era GTPase family. In terms of assembly, monomer.

Its subcellular location is the cytoplasm. It localises to the cell inner membrane. Functionally, an essential GTPase that binds both GDP and GTP, with rapid nucleotide exchange. Plays a role in 16S rRNA processing and 30S ribosomal subunit biogenesis and possibly also in cell cycle regulation and energy metabolism. The chain is GTPase Era from Coxiella burnetii (strain CbuG_Q212) (Coxiella burnetii (strain Q212)).